We begin with the raw amino-acid sequence, 503 residues long: AMP phosphorylase (503 aa).

Residues G168, S194–S199, and T203 each bind AMP. D256 (proton donor) is an active-site residue. AMP-binding residues include S264 and K288.

The protein belongs to the thymidine/pyrimidine-nucleoside phosphorylase family. Type 2 subfamily. As to quaternary structure, forms an exceptionally large macromolecular structure (&gt;40-mers) in solution.

It carries out the reaction AMP + phosphate = alpha-D-ribose 1,5-bisphosphate + adenine. It catalyses the reaction CMP + phosphate = cytosine + alpha-D-ribose 1,5-bisphosphate. The enzyme catalyses UMP + phosphate = alpha-D-ribose 1,5-bisphosphate + uracil. Its activity is regulated as follows. AMP phosphorolysis is allosterically regulated by the substrate AMP. Its function is as follows. Catalyzes the conversion of AMP and phosphate to adenine and ribose 1,5-bisphosphate (R15P). Exhibits phosphorylase activity toward CMP, dCMP and UMP in addition to AMP. Functions in an archaeal AMP degradation pathway, together with R15P isomerase and RubisCO. The polypeptide is AMP phosphorylase (Thermococcus kodakarensis (strain ATCC BAA-918 / JCM 12380 / KOD1) (Pyrococcus kodakaraensis (strain KOD1))).